Consider the following 143-residue polypeptide: Phosphoprotein 32 (143 aa).

Polar residues predominate over residues 1 to 14 (MESSNINALQQPSS). The tract at residues 1–32 (MESSNINALQQPSSIAHHPSKQCASSLNETVK) is disordered.

This sequence belongs to the varicellovirus ORF32 protein family. Phosphorylated by ORF47 protein.

This chain is Phosphoprotein 32, found in Homo sapiens (Human).